A 163-amino-acid polypeptide reads, in one-letter code: MVTAVFPGSFDPITRGHLDMIQRASRLVDRLIVAVMVNTSKQPLFTMTEKVAMISDELTGLPNVEVQAATGLTVDFMASVHATVLVRGLRNEQDFGYERDIAWMNKSLDETIETICLIARPPYAYFSSSLIKEVAKMGADVSKYVPTAVAQKLHQRLGTDQHD.

Position 9 (serine 9) interacts with substrate. ATP contacts are provided by residues 9–10 (SF) and histidine 17. 3 residues coordinate substrate: lysine 41, threonine 73, and arginine 87. Residues 88-90 (GLR), glutamate 98, and 123-129 (YAYFSSS) each bind ATP.

Belongs to the bacterial CoaD family. Homohexamer. Mg(2+) serves as cofactor.

The protein localises to the cytoplasm. It catalyses the reaction (R)-4'-phosphopantetheine + ATP + H(+) = 3'-dephospho-CoA + diphosphate. It participates in cofactor biosynthesis; coenzyme A biosynthesis; CoA from (R)-pantothenate: step 4/5. Its function is as follows. Reversibly transfers an adenylyl group from ATP to 4'-phosphopantetheine, yielding dephospho-CoA (dPCoA) and pyrophosphate. This Lactiplantibacillus plantarum (strain ATCC BAA-793 / NCIMB 8826 / WCFS1) (Lactobacillus plantarum) protein is Phosphopantetheine adenylyltransferase.